Here is a 98-residue protein sequence, read N- to C-terminus: MRPGRPLAGFYATLRRSFRRMSKRSKNKAKKERVPVEDRPPTPMPTSQRLIRRNALGGGVRPDAEDCIQRFHPLEPALGVSTKNFDLLSLRCELGWCG.

Basic residues predominate over residues 19 to 31 (RRMSKRSKNKAKK). The interval 19–47 (RRMSKRSKNKAKKERVPVEDRPPTPMPTS) is disordered.

The protein belongs to the lymphocryptovirus BNLF2b family.

This is an uncharacterized protein from Homo sapiens (Human).